A 118-amino-acid chain; its full sequence is Ribosome-binding factor A (118 aa).

This sequence belongs to the RbfA family. In terms of assembly, monomer. Binds 30S ribosomal subunits, but not 50S ribosomal subunits or 70S ribosomes.

The protein localises to the cytoplasm. Functionally, one of several proteins that assist in the late maturation steps of the functional core of the 30S ribosomal subunit. Associates with free 30S ribosomal subunits (but not with 30S subunits that are part of 70S ribosomes or polysomes). Required for efficient processing of 16S rRNA. May interact with the 5'-terminal helix region of 16S rRNA. The protein is Ribosome-binding factor A of Bacillus thuringiensis (strain Al Hakam).